Consider the following 288-residue polypeptide: Geranylgeranyl diphosphate synthase (288 aa).

Residues Arg43 and His73 each coordinate isopentenyl diphosphate. Mg(2+)-binding residues include Asp80 and Asp86. Arg91 contacts (2E,6E)-farnesyl diphosphate. Arg92 provides a ligand contact to isopentenyl diphosphate. (2E,6E)-farnesyl diphosphate contacts are provided by Lys170, Thr171, and Gln205.

The protein belongs to the FPP/GGPP synthase family. Requires Mg(2+) as cofactor.

It catalyses the reaction isopentenyl diphosphate + (2E,6E)-farnesyl diphosphate = (2E,6E,10E)-geranylgeranyl diphosphate + diphosphate. The protein operates within isoprenoid biosynthesis; geranylgeranyl diphosphate biosynthesis; geranylgeranyl diphosphate from farnesyl diphosphate and isopentenyl diphosphate: step 1/1. Catalyzes the condensation of farnesyl diphosphate (FPP) and isopentenyl diphosphate (IPP) to yield geranylgeranyl diphosphate (GGPP) needed for biosynthesis of carotenoids and diterpenes. This Cereibacter sphaeroides (strain ATCC 17023 / DSM 158 / JCM 6121 / CCUG 31486 / LMG 2827 / NBRC 12203 / NCIMB 8253 / ATH 2.4.1.) (Rhodobacter sphaeroides) protein is Geranylgeranyl diphosphate synthase (crtE).